The chain runs to 544 residues: CTP synthase (544 aa).

The tract at residues 1-265 (MTKFIFVTGG…DNIITEQLQL (265 aa)) is amidoligase domain. Residue serine 13 coordinates CTP. UTP is bound at residue serine 13. Residues 14-19 (SLGKGI) and aspartate 71 each bind ATP. Positions 71 and 139 each coordinate Mg(2+). Residues 146–148 (DIE), 186–191 (KTKPTQ), and lysine 222 each bind CTP. UTP contacts are provided by residues 186-191 (KTKPTQ) and lysine 222. Positions 290–544 (KIAMVGKYVD…VKAALNNKKA (255 aa)) constitute a Glutamine amidotransferase type-1 domain. Glycine 353 is an L-glutamine binding site. The active-site Nucleophile; for glutamine hydrolysis is cysteine 380. L-glutamine is bound by residues 381–384 (LGMQ), glutamate 404, and arginine 471. Active-site residues include histidine 517 and glutamate 519.

This sequence belongs to the CTP synthase family. Homotetramer.

It catalyses the reaction UTP + L-glutamine + ATP + H2O = CTP + L-glutamate + ADP + phosphate + 2 H(+). The enzyme catalyses L-glutamine + H2O = L-glutamate + NH4(+). The catalysed reaction is UTP + NH4(+) + ATP = CTP + ADP + phosphate + 2 H(+). It participates in pyrimidine metabolism; CTP biosynthesis via de novo pathway; CTP from UDP: step 2/2. Its activity is regulated as follows. Allosterically activated by GTP, when glutamine is the substrate; GTP has no effect on the reaction when ammonia is the substrate. The allosteric effector GTP functions by stabilizing the protein conformation that binds the tetrahedral intermediate(s) formed during glutamine hydrolysis. Inhibited by the product CTP, via allosteric rather than competitive inhibition. In terms of biological role, catalyzes the ATP-dependent amination of UTP to CTP with either L-glutamine or ammonia as the source of nitrogen. Regulates intracellular CTP levels through interactions with the four ribonucleotide triphosphates. In Neisseria meningitidis serogroup C (strain 053442), this protein is CTP synthase.